Consider the following 116-residue polypeptide: Ribosome-binding factor A (116 aa).

It belongs to the RbfA family. Monomer. Binds 30S ribosomal subunits, but not 50S ribosomal subunits or 70S ribosomes.

It is found in the cytoplasm. Its function is as follows. One of several proteins that assist in the late maturation steps of the functional core of the 30S ribosomal subunit. Associates with free 30S ribosomal subunits (but not with 30S subunits that are part of 70S ribosomes or polysomes). Required for efficient processing of 16S rRNA. May interact with the 5'-terminal helix region of 16S rRNA. This is Ribosome-binding factor A from Ureaplasma parvum serovar 3 (strain ATCC 27815 / 27 / NCTC 11736).